The following is a 208-amino-acid chain: Large ribosomal subunit protein uL4 (208 aa).

Positions 42 to 77 (SMRQGTHKTKTKTEVSGGGRKPWRQKGTGRARQGSI) are disordered.

This sequence belongs to the universal ribosomal protein uL4 family. In terms of assembly, part of the 50S ribosomal subunit.

One of the primary rRNA binding proteins, this protein initially binds near the 5'-end of the 23S rRNA. It is important during the early stages of 50S assembly. It makes multiple contacts with different domains of the 23S rRNA in the assembled 50S subunit and ribosome. Its function is as follows. Forms part of the polypeptide exit tunnel. The sequence is that of Large ribosomal subunit protein uL4 from Spiroplasma kunkelii.